Here is a 246-residue protein sequence, read N- to C-terminus: Octanoyltransferase (246 aa).

A BPL/LPL catalytic domain is found at 54-240 (DPPPEAVWLL…CLEPNADAAI (187 aa)). Substrate is bound by residues 96 to 103 (RGGEVTHH), 163 to 165 (AIG), and 176 to 178 (GVA). The active-site Acyl-thioester intermediate is cysteine 194.

The protein belongs to the LipB family.

It is found in the cytoplasm. The enzyme catalyses octanoyl-[ACP] + L-lysyl-[protein] = N(6)-octanoyl-L-lysyl-[protein] + holo-[ACP] + H(+). Its pathway is protein modification; protein lipoylation via endogenous pathway; protein N(6)-(lipoyl)lysine from octanoyl-[acyl-carrier-protein]: step 1/2. In terms of biological role, catalyzes the transfer of endogenously produced octanoic acid from octanoyl-acyl-carrier-protein onto the lipoyl domains of lipoate-dependent enzymes. Lipoyl-ACP can also act as a substrate although octanoyl-ACP is likely to be the physiological substrate. The protein is Octanoyltransferase of Synechococcus sp. (strain WH7803).